The chain runs to 460 residues: UDP-N-acetylmuramoylalanine--D-glutamate ligase (460 aa).

ATP is bound at residue Gly-120–Thr-126.

The protein belongs to the MurCDEF family.

It is found in the cytoplasm. It carries out the reaction UDP-N-acetyl-alpha-D-muramoyl-L-alanine + D-glutamate + ATP = UDP-N-acetyl-alpha-D-muramoyl-L-alanyl-D-glutamate + ADP + phosphate + H(+). It participates in cell wall biogenesis; peptidoglycan biosynthesis. Its function is as follows. Cell wall formation. Catalyzes the addition of glutamate to the nucleotide precursor UDP-N-acetylmuramoyl-L-alanine (UMA). The polypeptide is UDP-N-acetylmuramoylalanine--D-glutamate ligase (Lactobacillus johnsonii (strain CNCM I-12250 / La1 / NCC 533)).